We begin with the raw amino-acid sequence, 171 residues long: Pro-corazonin (171 aa).

Residues 1-20 (MLHTRTIALLLVGLVVLVNA) form the signal peptide. Pyrrolidone carboxylic acid is present on Gln21. Asn31 is subject to Asparagine amide. A propeptide spanning residues 82–171 (FLRNPCDLRV…GFSDHRQKIA (90 aa)) is cleaved from the precursor.

It belongs to the corazonin family.

The protein resides in the secreted. Functionally, cardioactive peptide. Corazonin is probably involved in the physiological regulation of the heart beat. In Anopheles gambiae (African malaria mosquito), this protein is Pro-corazonin.